Reading from the N-terminus, the 195-residue chain is Acireductone dioxygenase 2 (195 aa).

Residues His-94, His-96, Glu-100, and His-139 each contribute to the Fe(2+) site. Ni(2+) is bound by residues His-94, His-96, Glu-100, and His-139.

Belongs to the acireductone dioxygenase (ARD) family. It depends on Fe(2+) as a cofactor. Requires Ni(2+) as cofactor.

It localises to the cytoplasm. It is found in the nucleus. The enzyme catalyses 1,2-dihydroxy-5-(methylsulfanyl)pent-1-en-3-one + O2 = 4-methylsulfanyl-2-oxobutanoate + formate + 2 H(+). The catalysed reaction is 1,2-dihydroxy-5-(methylsulfanyl)pent-1-en-3-one + O2 = 3-(methylsulfanyl)propanoate + CO + formate + 2 H(+). It functions in the pathway amino-acid biosynthesis; L-methionine biosynthesis via salvage pathway; L-methionine from S-methyl-5-thio-alpha-D-ribose 1-phosphate: step 5/6. Catalyzes 2 different reactions between oxygen and the acireductone 1,2-dihydroxy-3-keto-5-methylthiopentene (DHK-MTPene) depending upon the metal bound in the active site. Fe-containing acireductone dioxygenase (Fe-ARD) produces formate and 2-keto-4-methylthiobutyrate (KMTB), the alpha-ketoacid precursor of methionine in the methionine recycle pathway. Ni-containing acireductone dioxygenase (Ni-ARD) produces methylthiopropionate, carbon monoxide and formate, and does not lie on the methionine recycle pathway. This Physcomitrium patens (Spreading-leaved earth moss) protein is Acireductone dioxygenase 2.